A 227-amino-acid chain; its full sequence is Rho-related GTP-binding protein RhoN (227 aa).

Residue 14–21 (GDAECGKT) participates in GTP binding. The short motif at 36–44 (YVPTVFENY) is the Effector region element. GTP-binding positions include 61 to 65 (DTSGS) and 119 to 122 (CKLD). The disordered stretch occupies residues 186–227 (HRQLRRTDSRRGLQRSTQLSGRPDRGNEGEMHKDRAKSCNLM). Basic and acidic residues predominate over residues 207 to 227 (RPDRGNEGEMHKDRAKSCNLM). Cys224 is modified (cysteine methyl ester). A lipid anchor (S-geranylgeranyl cysteine) is attached at Cys224. The propeptide at 225-227 (NLM) is removed in mature form.

It belongs to the small GTPase superfamily. Rho family. Interacts with the Rho-GAP domain of RACGAP1. Interacts with UBXD5. Interacts with PRAG1. In terms of tissue distribution, expressed specifically in neurons in the brain and spinal cord and also in hepatic stellate cells.

Its subcellular location is the cytoplasmic vesicle. The protein localises to the secretory vesicle. The protein resides in the acrosome membrane. In terms of biological role, may be specifically involved in neuronal and hepatic functions. Is a C3 toxin-insensitive member of the Rho subfamily. This chain is Rho-related GTP-binding protein RhoN (Rnd2), found in Mus musculus (Mouse).